A 263-amino-acid polypeptide reads, in one-letter code: Granzyme K (263 aa).

Residues 1–21 (MRFSSWALVSLVAGVYMSSEC) form the signal peptide. Positions 22–25 (FHTE) are cleaved as a propeptide — activation peptide. The 233-residue stretch at 26–258 (IIGGREVQPH…YQTWIKSKLA (233 aa)) folds into the Peptidase S1 domain. A disulfide bridge connects residues Cys51 and Cys67. Catalysis depends on charge relay system residues His66 and Asp115. Disulfide bonds link Cys148–Cys219, Cys180–Cys198, and Cys209–Cys233. The active-site Charge relay system is Ser213.

It belongs to the peptidase S1 family. Granzyme subfamily.

The protein localises to the cytoplasmic granule. This is Granzyme K (Gzmk) from Mus musculus (Mouse).